The primary structure comprises 160 residues: Large ribosomal subunit protein bL9 (160 aa).

It belongs to the bacterial ribosomal protein bL9 family.

Functionally, binds to the 23S rRNA. This chain is Large ribosomal subunit protein bL9, found in Neorickettsia sennetsu (strain ATCC VR-367 / Miyayama) (Ehrlichia sennetsu).